The following is a 306-amino-acid chain: Pantothenate kinase (306 aa).

ATP is bound at residue 91–98; it reads GSVAVGKS.

The protein belongs to the prokaryotic pantothenate kinase family.

It localises to the cytoplasm. The enzyme catalyses (R)-pantothenate + ATP = (R)-4'-phosphopantothenate + ADP + H(+). Its pathway is cofactor biosynthesis; coenzyme A biosynthesis; CoA from (R)-pantothenate: step 1/5. The protein is Pantothenate kinase of Streptococcus equi subsp. zooepidemicus (strain H70).